The sequence spans 217 residues: Probable transaldolase (217 aa).

The active-site Schiff-base intermediate with substrate is the Lys83.

Belongs to the transaldolase family. Type 3B subfamily.

The protein resides in the cytoplasm. The enzyme catalyses D-sedoheptulose 7-phosphate + D-glyceraldehyde 3-phosphate = D-erythrose 4-phosphate + beta-D-fructose 6-phosphate. The protein operates within carbohydrate degradation; pentose phosphate pathway; D-glyceraldehyde 3-phosphate and beta-D-fructose 6-phosphate from D-ribose 5-phosphate and D-xylulose 5-phosphate (non-oxidative stage): step 2/3. Transaldolase is important for the balance of metabolites in the pentose-phosphate pathway. In Rhizorhabdus wittichii (strain DSM 6014 / CCUG 31198 / JCM 15750 / NBRC 105917 / EY 4224 / RW1) (Sphingomonas wittichii), this protein is Probable transaldolase.